The sequence spans 160 residues: Putative NrdI-like protein (160 aa).

The protein belongs to the NrdI family.

This is Putative NrdI-like protein from Streptococcus pyogenes serotype M6 (strain ATCC BAA-946 / MGAS10394).